Reading from the N-terminus, the 428-residue chain is Adenylosuccinate synthetase (428 aa).

Residues glycine 12 to lysine 18 and glycine 40 to threonine 42 each bind GTP. Aspartate 13 (proton acceptor) is an active-site residue. Aspartate 13 and glycine 40 together coordinate Mg(2+). Residues aspartate 13–lysine 16, asparagine 38–histidine 41, threonine 128, arginine 142, glutamine 223, threonine 238, and arginine 302 each bind IMP. Histidine 41 (proton donor) is an active-site residue. Threonine 298–arginine 304 contacts substrate. Residues arginine 304, serine 330–aspartate 332, and serine 412–glycine 414 each bind GTP.

It belongs to the adenylosuccinate synthetase family. Homodimer. It depends on Mg(2+) as a cofactor.

Its subcellular location is the cytoplasm. The enzyme catalyses IMP + L-aspartate + GTP = N(6)-(1,2-dicarboxyethyl)-AMP + GDP + phosphate + 2 H(+). It participates in purine metabolism; AMP biosynthesis via de novo pathway; AMP from IMP: step 1/2. Plays an important role in the de novo pathway of purine nucleotide biosynthesis. Catalyzes the first committed step in the biosynthesis of AMP from IMP. The chain is Adenylosuccinate synthetase from Geobacillus kaustophilus (strain HTA426).